A 90-amino-acid chain; its full sequence is MSHYGSYYGGLGYSCGGFGGLGYGYGCGCGSFCRRGSGCGYGGYGYGSGFGSYGYGSGFGGYGYGSGFGGYGYGCCRPSYNGGYGFSGFY.

Residues 5–84 (GSYYGGLGYS…CCRPSYNGGY (80 aa)) form a 26 X 2 AA repeats of G-[YCGS] region.

Belongs to the KRTAP type 19 family. Interacts with hair keratins. In terms of tissue distribution, detected in the upper portion of the hair cortex.

In the hair cortex, hair keratin intermediate filaments are embedded in an interfilamentous matrix, consisting of hair keratin-associated proteins (KRTAP), which are essential for the formation of a rigid and resistant hair shaft through their extensive disulfide bond cross-linking with abundant cysteine residues of hair keratins. The matrix proteins include the high-sulfur and high-glycine-tyrosine keratins. This chain is Keratin-associated protein 19-1 (KRTAP19-1), found in Homo sapiens (Human).